Here is an 826-residue protein sequence, read N- to C-terminus: Dolichyl-diphosphooligosaccharide--protein glycosyltransferase subunit STT3B (826 aa).

The tract at residues 1 to 60 (MAEPSAPESKHKSSLNSSPWSGLMALGNSRHGHHGPGAQCAHKAAGGVAPPKPAPAGLSG) is disordered. Ala-2 is subject to N-acetylalanine. Residues 2 to 41 (AEPSAPESKHKSSLNSSPWSGLMALGNSRHGHHGPGAQCA) are Cytoplasmic-facing. 3 positions are modified to phosphoserine: Ser-13, Ser-18, and Ser-29. Residues 42 to 86 (HKAAGGVAPPKPAPAGLSGGLSQPAGWQSLLSFTILFLAWLAGFS) traverse the membrane as a helical segment. Topologically, residues 87–173 (SRLFAVIRFE…VHIRDVCVFL (87 aa)) are lumenal. A DXD motif 1 motif is present at residues 101 to 103 (EFD). Asp-103 is a binding site for Mn(2+). Residues 174 to 192 (APTFSGLTSISTFLLTREL) traverse the membrane as a helical segment. Topologically, residues 193–194 (WN) are cytoplasmic. The chain crosses the membrane as a helical span at residues 195–212 (QGAGLLAACFIAIVPGYI). Over 213–223 (SRSVAGSFDNE) the chain is Lumenal. Asp-221 and Glu-223 together coordinate Mn(2+). The DXD motif 2 signature appears at 221-223 (DNE). Residues 224–243 (GIAIFALQFTYYLWVKSVKT) traverse the membrane as a helical segment. Topologically, residues 244–245 (GS) are cytoplasmic. A helical transmembrane segment spans residues 246–260 (VFWTMCCCLSYFYMV). Over 261–265 (SAWGG) the chain is Lumenal. Residues 266–282 (YVFIINLIPLHVFVLLL) traverse the membrane as a helical segment. Residues 283–287 (MQRYS) are Cytoplasmic-facing. Residues 288 to 313 (KRVYIAYSTFYIVGLILSMQIPFVGF) traverse the membrane as a helical segment. Over 314 to 321 (QPIRTSEH) the chain is Lumenal. A helical transmembrane segment spans residues 322–341 (MAAAGVFALLQAYAFLQYLR). The Cytoplasmic segment spans residues 342–350 (DRLTKQEFQ). The helical transmembrane segment at 351-371 (TLFFLGVSLAAGAVFLSVIYL) threads the bilayer. The Lumenal segment spans residues 372–410 (TYTGYIAPWSGRFYSLWDTGYAKIHIPIIASVSEHQPTT). Positions 402–405 (SVSE) match the SVSE motif motif. The helical transmembrane segment at 411–433 (WVSFFFDLHILVCTFPAGLWFCI) threads the bilayer. Residues 434–439 (KNINDE) are Cytoplasmic-facing. Residues 440-456 (RVFVALYAISAVYFAGV) form a helical membrane-spanning segment. The Lumenal segment spans residues 457-460 (MVRL). Arg-459 contributes to the dolichyl diphosphooligosaccharide binding site. Residues 461–482 (MLTLTPVVCMLSAIAFSNVFEH) form a helical membrane-spanning segment. Residues 483 to 526 (YLGDDMKRENPPVEDSSDEDDKRNPGNLYDKAGKVRKHVTEQEK) are Cytoplasmic-facing. The tract at residues 490–512 (RENPPVEDSSDEDDKRNPGNLYD) is disordered. Ser-498 and Ser-499 each carry phosphoserine. The chain crosses the membrane as a helical span at residues 527 to 552 (TEEGLGPNIKSIVTMLMLMLLMMFAV). Over 553–826 (HCTWVTSNAY…KGKKISKKTV (274 aa)) the chain is Lumenal. The interval 604 to 606 (WWD) is interacts with target acceptor peptide in protein substrate. A WWDYG motif motif is present at residues 604–608 (WWDYG). Tyr-609 is a binding site for dolichyl diphosphooligosaccharide. N-linked (GlcNAc...) asparagine glycosylation is found at Asn-616 and Asn-623. Residue Asn-627 is glycosylated (N-linked (GlcNAc...) (high mannose) asparagine). The N-linked (GlcNAc...) asparagine glycan is linked to Asn-641. Residues 671 to 678 (DINKFLWM) carry the DK motif motif.

Belongs to the STT3 family. In terms of assembly, component of the oligosaccharyltransferase (OST) complex. There are 2 OST complexes, OST-A and OST-B, which contain STT3A or STT3B as catalytic subunit, respectively. OST-A and OST-B contain common core subunits RPN1, RPN2, OST48, OST4, DAD1 and TMEM258, and OST-B contains either MAGT1 or TUSC3 as specific accessory subunit. The cofactor is Mg(2+). Mn(2+) serves as cofactor.

The protein resides in the endoplasmic reticulum. The protein localises to the endoplasmic reticulum membrane. It catalyses the reaction a di-trans,poly-cis-dolichyl diphosphooligosaccharide + L-asparaginyl-[protein] = N(4)-(oligosaccharide-(1-&gt;4)-N-acetyl-beta-D-glucosaminyl-(1-&gt;4)-N-acetyl-beta-D-glucosaminyl)-L-asparaginyl-[protein] + a di-trans,poly-cis-dolichyl diphosphate + H(+). It participates in protein modification; protein glycosylation. Catalytic subunit of the oligosaccharyl transferase (OST) complex that catalyzes the initial transfer of a defined glycan (Glc(3)Man(9)GlcNAc(2) in eukaryotes) from the lipid carrier dolichol-pyrophosphate to an asparagine residue within an Asn-X-Ser/Thr consensus motif in nascent polypeptide chains, the first step in protein N-glycosylation. N-glycosylation occurs cotranslationally and the complex associates with the Sec61 complex at the channel-forming translocon complex that mediates protein translocation across the endoplasmic reticulum (ER). All subunits are required for a maximal enzyme activity. This subunit contains the active site and the acceptor peptide and donor lipid-linked oligosaccharide (LLO) binding pockets. STT3B is present in a small subset of OST complexes and mediates both cotranslational and post-translational N-glycosylation of target proteins: STT3B-containing complexes are required for efficient post-translational glycosylation and while they are less competent than STT3A-containing complexes for cotranslational glycosylation, they have the ability to mediate glycosylation of some nascent sites that are not accessible for STT3A. STT3B-containing complexes also act post-translationally and mediate modification of skipped glycosylation sites in unfolded proteins. Plays a role in ER-associated degradation (ERAD) pathway that mediates ubiquitin-dependent degradation of misfolded endoplasmic reticulum proteins by mediating N-glycosylation of unfolded proteins, which are then recognized by the ERAD pathway and targeted for degradation. In Canis lupus familiaris (Dog), this protein is Dolichyl-diphosphooligosaccharide--protein glycosyltransferase subunit STT3B.